The following is a 157-amino-acid chain: Ribosome maturation factor RimP (157 aa).

This sequence belongs to the RimP family.

It is found in the cytoplasm. Functionally, required for maturation of 30S ribosomal subunits. In Thermobifida fusca (strain YX), this protein is Ribosome maturation factor RimP.